The chain runs to 148 residues: Large ribosomal subunit protein bL9 (148 aa).

It belongs to the bacterial ribosomal protein bL9 family.

Binds to the 23S rRNA. This is Large ribosomal subunit protein bL9 from Thermus thermophilus.